A 287-amino-acid chain; its full sequence is Uroplakin-3a (287 aa).

Positions 1–18 are cleaved as a signal peptide; it reads MLLLWALLALGCLRCGWT. Residues 19–207 lie on the Lumenal side of the membrane; that stretch reads VNLQPQLASV…DTWPGRRSGG (189 aa). N-linked (GlcNAc...) asparagine glycans are attached at residues N74, N139, and N170. A helical transmembrane segment spans residues 208–235; that stretch reads MIVITSILGSLPFFLLVGFAGAIILSFV. At 236–287 the chain is on the cytoplasmic side; sequence DMGSSDGEMTHDSQITQEAVPKTLGTSEPSYSSVNRGPPLDRAEVFSSKLQD. The interval 243–287 is disordered; the sequence is EMTHDSQITQEAVPKTLGTSEPSYSSVNRGPPLDRAEVFSSKLQD. The segment covering 259 to 270 has biased composition (polar residues); the sequence is LGTSEPSYSSVN.

Belongs to the uroplakin-3 family. Heterodimer with uroplakin-1B (UPK1B).

It is found in the endoplasmic reticulum membrane. Component of the asymmetric unit membrane (AUM); a highly specialized biomembrane elaborated by terminally differentiated urothelial cells. May play an important role in AUM-cytoskeleton interaction in terminally differentiated urothelial cells. It also contributes to the formation of urothelial glycocalyx which may play an important role in preventing bacterial adherence. The sequence is that of Uroplakin-3a (Upk3a) from Mus musculus (Mouse).